A 92-amino-acid chain; its full sequence is UPF0223 protein Sez_0908 (92 aa).

Belongs to the UPF0223 family.

This chain is UPF0223 protein Sez_0908, found in Streptococcus equi subsp. zooepidemicus (strain MGCS10565).